We begin with the raw amino-acid sequence, 143 residues long: Anti-sigma F factor (143 aa).

The protein belongs to the anti-sigma-factor family.

The enzyme catalyses L-seryl-[protein] + ATP = O-phospho-L-seryl-[protein] + ADP + H(+). It carries out the reaction L-threonyl-[protein] + ATP = O-phospho-L-threonyl-[protein] + ADP + H(+). Its function is as follows. Binds to sigma F and blocks its ability to form an RNA polymerase holoenzyme (E-sigma F). Phosphorylates SpoIIAA on a serine residue. This phosphorylation may enable SpoIIAA to act as an anti-anti-sigma factor that counteracts SpoIIAB and thus releases sigma F from inhibition. In Thermoanaerobacter pseudethanolicus (strain ATCC 33223 / 39E) (Clostridium thermohydrosulfuricum), this protein is Anti-sigma F factor.